Here is a 65-residue protein sequence, read N- to C-terminus: Putative beta-neurotoxin RjAa8 (65 aa).

The LCN-type CS-alpha/beta domain occupies 1–64 (KEGYPMGRDG…VWDSSTNKCG (64 aa)). Disulfide bonds link Cys-11–Cys-63, Cys-15–Cys-37, Cys-22–Cys-44, and Cys-26–Cys-46.

This sequence belongs to the long (4 C-C) scorpion toxin superfamily. Sodium channel inhibitor family. Beta subfamily. In terms of tissue distribution, expressed by the venom gland.

It localises to the secreted. Beta toxins bind voltage-independently at site-4 of sodium channels (Nav) and shift the voltage of activation toward more negative potentials thereby affecting sodium channel activation and promoting spontaneous and repetitive firing. The chain is Putative beta-neurotoxin RjAa8 from Rhopalurus junceus (Caribbean blue scorpion).